The chain runs to 118 residues: uncharacterized protein (118 aa).

C11 and C14 form a disulfide bridge.

This sequence belongs to the ArsC family.

This is an uncharacterized protein from Bacillus subtilis (strain 168).